A 147-amino-acid polypeptide reads, in one-letter code: Helix-loop-helix protein 13 (147 aa).

Positions 41–93 (EERQTASIRERKRMCSINVAFIELRNYIPTFPYEKRLSKIDTLNLAIAYINML) constitute a bHLH domain.

In terms of tissue distribution, expressed in hermaphrodite dopaminergic neurons (ADE, CEP, and PDE).

It localises to the nucleus. It is found in the cytoplasm. Its function is as follows. Transcriptional activator. Shown to have a role in the negative regulation of exit from L1 arrest and dauer diapause dependent on IIS signaling (insulin and insulin-like growth factor (IGF) signaling). Hypodermal expression is regulated by IIS/daf-16 while neuronal expression is not under the control of IIS/daf-16. In Caenorhabditis elegans, this protein is Helix-loop-helix protein 13.